The chain runs to 135 residues: Ribonuclease P protein component (135 aa).

The protein belongs to the RnpA family. Consists of a catalytic RNA component (M1 or rnpB) and a protein subunit.

The catalysed reaction is Endonucleolytic cleavage of RNA, removing 5'-extranucleotides from tRNA precursor.. RNaseP catalyzes the removal of the 5'-leader sequence from pre-tRNA to produce the mature 5'-terminus. It can also cleave other RNA substrates such as 4.5S RNA. The protein component plays an auxiliary but essential role in vivo by binding to the 5'-leader sequence and broadening the substrate specificity of the ribozyme. This chain is Ribonuclease P protein component, found in Xylella fastidiosa (strain Temecula1 / ATCC 700964).